Here is a 290-residue protein sequence, read N- to C-terminus: 6-phospho-5-dehydro-2-deoxy-D-gluconate aldolase (290 aa).

The active-site Proton donor is the D85. Zn(2+)-binding residues include H86 and H180. Dihydroxyacetone phosphate is bound at residue G181. A Zn(2+)-binding site is contributed by H208. Dihydroxyacetone phosphate is bound by residues 209–211 (GAS) and 230–233 (NINT). Phosphothreonine is present on T233.

This sequence belongs to the class II fructose-bisphosphate aldolase family. IolJ subfamily. Zn(2+) is required as a cofactor.

The catalysed reaction is 6-phospho-5-dehydro-2-deoxy-D-gluconate = 3-oxopropanoate + dihydroxyacetone phosphate. It functions in the pathway polyol metabolism; myo-inositol degradation into acetyl-CoA; acetyl-CoA from myo-inositol: step 6/7. In terms of biological role, produces dihydroxyacetone phosphate (DHAP or glycerone phosphate) and malonic semialdehyde (MSA or 3-oxopropanoate) from 6-phospho-5-dehydro-2-deoxy-D-gluconate (DKGP). In Bacillus velezensis (strain DSM 23117 / BGSC 10A6 / LMG 26770 / FZB42) (Bacillus amyloliquefaciens subsp. plantarum), this protein is 6-phospho-5-dehydro-2-deoxy-D-gluconate aldolase (iolJ).